Consider the following 279-residue polypeptide: Thymidylate synthase (279 aa).

133–134 serves as a coordination point for dUMP; the sequence is RR. The active-site Nucleophile is C154. DUMP is bound by residues 178–181, N189, and 219–221; these read RSND and HIY. D181 is a (6R)-5,10-methylene-5,6,7,8-tetrahydrofolate binding site. A278 provides a ligand contact to (6R)-5,10-methylene-5,6,7,8-tetrahydrofolate.

This sequence belongs to the thymidylate synthase family. Bacterial-type ThyA subfamily. As to quaternary structure, homodimer.

It localises to the cytoplasm. It catalyses the reaction dUMP + (6R)-5,10-methylene-5,6,7,8-tetrahydrofolate = 7,8-dihydrofolate + dTMP. It participates in pyrimidine metabolism; dTTP biosynthesis. In terms of biological role, catalyzes the reductive methylation of 2'-deoxyuridine-5'-monophosphate (dUMP) to 2'-deoxythymidine-5'-monophosphate (dTMP) while utilizing 5,10-methylenetetrahydrofolate (mTHF) as the methyl donor and reductant in the reaction, yielding dihydrofolate (DHF) as a by-product. This enzymatic reaction provides an intracellular de novo source of dTMP, an essential precursor for DNA biosynthesis. The sequence is that of Thymidylate synthase from Streptococcus mutans serotype c (strain ATCC 700610 / UA159).